The primary structure comprises 182 residues: LPS-assembly lipoprotein LptE (182 aa).

The signal sequence occupies residues 1 to 19 (MRHRILTLLLGLAVLVTAG). Cysteine 20 carries the N-palmitoyl cysteine lipid modification. Cysteine 20 carries S-diacylglycerol cysteine lipidation.

Belongs to the LptE lipoprotein family. In terms of assembly, component of the lipopolysaccharide transport and assembly complex. Interacts with LptD.

The protein localises to the cell outer membrane. Functionally, together with LptD, is involved in the assembly of lipopolysaccharide (LPS) at the surface of the outer membrane. Required for the proper assembly of LptD. Binds LPS and may serve as the LPS recognition site at the outer membrane. This Photorhabdus laumondii subsp. laumondii (strain DSM 15139 / CIP 105565 / TT01) (Photorhabdus luminescens subsp. laumondii) protein is LPS-assembly lipoprotein LptE.